Here is a 360-residue protein sequence, read N- to C-terminus: Photosystem II protein D1 (360 aa).

The next 3 helical transmembrane spans lie at 29-46 (YIGW…TATT), 118-133 (HFLL…EWEL), and 142-156 (WIAV…AATA). His-118 is a binding site for chlorophyll a. Residue Tyr-126 participates in pheophytin a binding. Residues Asp-170 and Glu-189 each contribute to the [CaMn4O5] cluster site. Residues 197 to 218 (FHMMGVAGVFGGSLFSAMHGSL) form a helical membrane-spanning segment. Position 198 (His-198) interacts with chlorophyll a. A quinone-binding positions include His-215 and 264–265 (SF). His-215 is a binding site for Fe cation. A Fe cation-binding site is contributed by His-272. The helical transmembrane segment at 274–288 (FLALWPVVGIWFTAL) threads the bilayer. His-332, Glu-333, Asp-342, and Ala-344 together coordinate [CaMn4O5] cluster. A propeptide spanning residues 345 to 360 (SGEVMPVALTAPSINA) is cleaved from the precursor.

It belongs to the reaction center PufL/M/PsbA/D family. In terms of assembly, PSII is composed of 1 copy each of membrane proteins PsbA, PsbB, PsbC, PsbD, PsbE, PsbF, PsbH, PsbI, PsbJ, PsbK, PsbL, PsbM, PsbT, PsbX, PsbY, PsbZ, Psb30/Ycf12, at least 3 peripheral proteins of the oxygen-evolving complex and a large number of cofactors. It forms dimeric complexes. The D1/D2 heterodimer binds P680, chlorophylls that are the primary electron donor of PSII, and subsequent electron acceptors. It shares a non-heme iron and each subunit binds pheophytin, quinone, additional chlorophylls, carotenoids and lipids. D1 provides most of the ligands for the Mn4-Ca-O5 cluster of the oxygen-evolving complex (OEC). There is also a Cl(-1) ion associated with D1 and D2, which is required for oxygen evolution. The PSII complex binds additional chlorophylls, carotenoids and specific lipids. is required as a cofactor. In terms of processing, tyr-161 forms a radical intermediate that is referred to as redox-active TyrZ, YZ or Y-Z. C-terminally processed by CTPA; processing is essential to allow assembly of the oxygen-evolving complex and thus photosynthetic growth.

Its subcellular location is the plastid. The protein resides in the cyanelle thylakoid membrane. The enzyme catalyses 2 a plastoquinone + 4 hnu + 2 H2O = 2 a plastoquinol + O2. Photosystem II (PSII) is a light-driven water:plastoquinone oxidoreductase that uses light energy to abstract electrons from H(2)O, generating O(2) and a proton gradient subsequently used for ATP formation. It consists of a core antenna complex that captures photons, and an electron transfer chain that converts photonic excitation into a charge separation. The D1/D2 (PsbA/PsbD) reaction center heterodimer binds P680, the primary electron donor of PSII as well as several subsequent electron acceptors. The sequence is that of Photosystem II protein D1 from Cyanophora paradoxa.